The following is a 129-amino-acid chain: NADH-quinone oxidoreductase subunit K 2 (129 aa).

3 helical membrane passes run 3–23, 28–48, and 68–88; these read LAYPAVLSALLFSTGLYGVLA, ILVLMSVELMLNAVNLNLVAF, and LFTIAIAAAEIGIGLAIVLAV. Positions 98–129 are disordered; it reads DKLRDTAEGPEPDGPGTDGSAPTAAEKAEATA. The span at 111-122 shows a compositional bias: low complexity; it reads GPGTDGSAPTAA.

Belongs to the complex I subunit 4L family. As to quaternary structure, NDH-1 is composed of 14 different subunits. Subunits NuoA, H, J, K, L, M, N constitute the membrane sector of the complex.

Its subcellular location is the cell membrane. The catalysed reaction is a quinone + NADH + 5 H(+)(in) = a quinol + NAD(+) + 4 H(+)(out). In terms of biological role, NDH-1 shuttles electrons from NADH, via FMN and iron-sulfur (Fe-S) centers, to quinones in the respiratory chain. The immediate electron acceptor for the enzyme in this species is believed to be a menaquinone. Couples the redox reaction to proton translocation (for every two electrons transferred, four hydrogen ions are translocated across the cytoplasmic membrane), and thus conserves the redox energy in a proton gradient. This chain is NADH-quinone oxidoreductase subunit K 2, found in Streptomyces avermitilis (strain ATCC 31267 / DSM 46492 / JCM 5070 / NBRC 14893 / NCIMB 12804 / NRRL 8165 / MA-4680).